A 224-amino-acid chain; its full sequence is Pyridoxine/pyridoxamine 5'-phosphate oxidase (224 aa).

Residues 69–74 (RHVLLK), 83–84 (FT), R89, K90, and Q112 contribute to the FMN site. K74 is a substrate binding site. The substrate site is built by Y130, R134, and S138. Residues 148–149 (QS) and W194 contribute to the FMN site. Residue 200 to 202 (RMH) participates in substrate binding. R204 contributes to the FMN binding site.

Belongs to the pyridoxamine 5'-phosphate oxidase family. Homodimer. Requires FMN as cofactor.

It carries out the reaction pyridoxamine 5'-phosphate + O2 + H2O = pyridoxal 5'-phosphate + H2O2 + NH4(+). The catalysed reaction is pyridoxine 5'-phosphate + O2 = pyridoxal 5'-phosphate + H2O2. The protein operates within cofactor metabolism; pyridoxal 5'-phosphate salvage; pyridoxal 5'-phosphate from pyridoxamine 5'-phosphate: step 1/1. It participates in cofactor metabolism; pyridoxal 5'-phosphate salvage; pyridoxal 5'-phosphate from pyridoxine 5'-phosphate: step 1/1. Its function is as follows. Catalyzes the oxidation of either pyridoxine 5'-phosphate (PNP) or pyridoxamine 5'-phosphate (PMP) into pyridoxal 5'-phosphate (PLP). The chain is Pyridoxine/pyridoxamine 5'-phosphate oxidase from Acidothermus cellulolyticus (strain ATCC 43068 / DSM 8971 / 11B).